Here is a 110-residue protein sequence, read N- to C-terminus: UPF0145 protein MTH_507 (110 aa).

The protein belongs to the UPF0145 family.

The chain is UPF0145 protein MTH_507 from Methanothermobacter thermautotrophicus (strain ATCC 29096 / DSM 1053 / JCM 10044 / NBRC 100330 / Delta H) (Methanobacterium thermoautotrophicum).